Reading from the N-terminus, the 1157-residue chain is Hephaestin (1157 aa).

An N-terminal signal peptide occupies residues 1-23 (MKAGHLLWALLLMHSLCSLPTDG). Plastocyanin-like domains follow at residues 24–206 (AIRN…LITC), 218–366 (QRKD…VDSC), 370–559 (PPVE…LLVC), 569–717 (KQKG…VSQC), 730–902 (ASRV…LVIC), and 910–1066 (NGGR…SHEE). Topologically, residues 24–1109 (AIRNYYLGIQ…PVKNVEILSS (1086 aa)) are extracellular. N-linked (GlcNAc...) asparagine glycans are attached at residues asparagine 49 and asparagine 54. Na(+) contacts are provided by glycine 70 and tyrosine 73. Positions 126 and 128 each coordinate Cu(2+). Histidine 126 contributes to the O2 binding site. The Ca(2+) site is built by lysine 134, aspartate 152, and aspartate 153. Asparagine 164 is a glycosylation site (N-linked (GlcNAc...) asparagine). The cysteines at positions 180 and 206 are disulfide-linked. Residues histidine 186 and histidine 188 each coordinate Cu(2+). Histidine 186 contacts O2. N-linked (GlcNAc...) asparagine glycosylation is present at asparagine 236. Serine 265 serves as a coordination point for Na(+). Residues cysteine 285 and cysteine 366 are joined by a disulfide bond. Positions 304, 347, and 352 each coordinate Cu(2+). Residues tyrosine 416, glycine 425, and tyrosine 428 each coordinate Na(+). Cysteines 533 and 559 form a disulfide. The N-linked (GlcNAc...) asparagine glycan is linked to asparagine 587. Serine 616 lines the Na(+) pocket. Cysteine 636 and cysteine 717 form a disulfide bridge. Histidine 655, cysteine 698, histidine 703, and methionine 708 together coordinate Cu(2+). Residues asparagine 713 and asparagine 757 are each glycosylated (N-linked (GlcNAc...) asparagine). Na(+) contacts are provided by phenylalanine 768 and glycine 777. Cysteine 876 and cysteine 902 form a disulfide bridge. N-linked (GlcNAc...) asparagine glycosylation is present at asparagine 930. Positions 999, 1002, 1004, 1044, 1045, 1046, 1050, and 1055 each coordinate Cu(2+). Positions 1002 and 1004 each coordinate O2. Histidine 1046 is a binding site for O2. Residues 1110–1130 (ALIAICVVLLLIALALGGVVW) form a helical membrane-spanning segment. At 1131–1157 (YQHRQRKLRRNRRSILDDSFKLLSLKQ) the chain is on the cytoplasmic side. Phosphoserine is present on residues serine 1144, serine 1149, and serine 1154.

The protein belongs to the multicopper oxidase family. As to quaternary structure, part of a complex composed of SLC40A1/ferroportin, TF/transferrin and HEPH/hephaestin that transfers iron from cells to transferrin. The cofactor is Cu cation. As to expression, highly expressed in small intestine and colon.

The protein resides in the basolateral cell membrane. It carries out the reaction 4 Fe(2+) + O2 + 4 H(+) = 4 Fe(3+) + 2 H2O. Its function is as follows. Plasma membrane ferroxidase that mediates the extracellular conversion of ferrous/Fe(2+) iron into its ferric/Fe(3+) form. Couples ferroportin which specifically exports ferrous/Fe(2+) iron from cells to transferrin that only binds and shuttles extracellular ferric/Fe(3+) iron throughout the body. By helping iron transfer from cells to blood mainly contributes to dietary iron absorption by the intestinal epithelium and more generally regulates iron levels in the body. This Rattus norvegicus (Rat) protein is Hephaestin.